The following is a 205-amino-acid chain: MAPIKIGIGGPVGSGKTELIERITRALDGEIEMAAITNDIYTLEDAKILARNSVLDEDRIIGVETGGCPHTAIREDTSMNDAAYEEIVKRHPNLDIVFVESGGDNLSATFSPELVDFSIYIIDVAQGEKIPRKAGQGMIKSDLFVINKTDLAPYVGADLSVMEADSKNFRGEKPFVMTNLKTDEGLDGVLRWIREDVLMSDLAES.

Position 10 to 17 (10 to 17 (GPVGSGKT)) interacts with GTP.

This sequence belongs to the SIMIBI class G3E GTPase family. UreG subfamily. In terms of assembly, homodimer. UreD, UreF and UreG form a complex that acts as a GTP-hydrolysis-dependent molecular chaperone, activating the urease apoprotein by helping to assemble the nickel containing metallocenter of UreC. The UreE protein probably delivers the nickel.

Its subcellular location is the cytoplasm. In terms of biological role, facilitates the functional incorporation of the urease nickel metallocenter. This process requires GTP hydrolysis, probably effectuated by UreG. The chain is Urease accessory protein UreG from Corynebacterium urealyticum (strain ATCC 43042 / DSM 7109).